The chain runs to 357 residues: Peptide chain release factor 1 (357 aa).

Gln236 is subject to N5-methylglutamine.

This sequence belongs to the prokaryotic/mitochondrial release factor family. Post-translationally, methylated by PrmC. Methylation increases the termination efficiency of RF1.

It localises to the cytoplasm. Peptide chain release factor 1 directs the termination of translation in response to the peptide chain termination codons UAG and UAA. The sequence is that of Peptide chain release factor 1 from Mycobacterium ulcerans (strain Agy99).